A 329-amino-acid chain; its full sequence is Flotillin-like protein FloA (329 aa).

The next 2 membrane-spanning stretches (helical) occupy residues 5–25 (IFLL…LSFI) and 27–47 (LGLW…TLVG).

The protein belongs to the flotillin-like FloA family. Homooligomerizes.

It is found in the cell membrane. It localises to the membrane raft. Functionally, found in functional membrane microdomains (FMM) that may be equivalent to eukaryotic membrane rafts. FMMs are highly dynamic and increase in number as cells age. Flotillins are thought to be important factors in membrane fluidity. In Thermoanaerobacter sp. (strain X514), this protein is Flotillin-like protein FloA.